Here is a 77-residue protein sequence, read N- to C-terminus: Acyl carrier protein (77 aa).

The Carrier domain occupies 2-77 (SDVAERVKKI…DAIDFITANS (76 aa)). An O-(pantetheine 4'-phosphoryl)serine modification is found at serine 37.

Belongs to the acyl carrier protein (ACP) family. In terms of processing, 4'-phosphopantetheine is transferred from CoA to a specific serine of apo-ACP by AcpS. This modification is essential for activity because fatty acids are bound in thioester linkage to the sulfhydryl of the prosthetic group.

The protein resides in the cytoplasm. It participates in lipid metabolism; fatty acid biosynthesis. Functionally, carrier of the growing fatty acid chain in fatty acid biosynthesis. The protein is Acyl carrier protein of Paramagnetospirillum magneticum (strain ATCC 700264 / AMB-1) (Magnetospirillum magneticum).